The sequence spans 411 residues: Serine hydroxymethyltransferase (411 aa).

Residues leucine 117 and glycine 121–leucine 123 each bind (6S)-5,6,7,8-tetrahydrofolate. Lysine 226 is modified (N6-(pyridoxal phosphate)lysine). Residues glutamate 241 and serine 349 to phenylalanine 351 contribute to the (6S)-5,6,7,8-tetrahydrofolate site.

It belongs to the SHMT family. Homodimer. Pyridoxal 5'-phosphate serves as cofactor.

The protein resides in the cytoplasm. It carries out the reaction (6R)-5,10-methylene-5,6,7,8-tetrahydrofolate + glycine + H2O = (6S)-5,6,7,8-tetrahydrofolate + L-serine. Its pathway is one-carbon metabolism; tetrahydrofolate interconversion. It functions in the pathway amino-acid biosynthesis; glycine biosynthesis; glycine from L-serine: step 1/1. Its function is as follows. Catalyzes the reversible interconversion of serine and glycine with tetrahydrofolate (THF) serving as the one-carbon carrier. This reaction serves as the major source of one-carbon groups required for the biosynthesis of purines, thymidylate, methionine, and other important biomolecules. Also exhibits THF-independent aldolase activity toward beta-hydroxyamino acids, producing glycine and aldehydes, via a retro-aldol mechanism. The chain is Serine hydroxymethyltransferase from Macrococcus caseolyticus (strain JCSC5402) (Macrococcoides caseolyticum).